Here is a 139-residue protein sequence, read N- to C-terminus: Large-conductance mechanosensitive channel (139 aa).

2 helical membrane passes run 17-37 (VVDMAVGVIIGGAFGKIVTSL) and 88-108 (TVDFLILAFVIFLMIKAIMAA).

It belongs to the MscL family. As to quaternary structure, homopentamer.

The protein localises to the cell inner membrane. Channel that opens in response to stretch forces in the membrane lipid bilayer. May participate in the regulation of osmotic pressure changes within the cell. The chain is Large-conductance mechanosensitive channel from Porphyromonas gingivalis (strain ATCC 33277 / DSM 20709 / CIP 103683 / JCM 12257 / NCTC 11834 / 2561).